A 548-amino-acid polypeptide reads, in one-letter code: Chaperonin GroEL (548 aa).

Residues 29–32 (TLGP), K50, 86–90 (DGTTT), G416, and D497 each bind ATP.

The protein belongs to the chaperonin (HSP60) family. Forms a cylinder of 14 subunits composed of two heptameric rings stacked back-to-back. Interacts with the co-chaperonin GroES.

The protein resides in the cytoplasm. It catalyses the reaction ATP + H2O + a folded polypeptide = ADP + phosphate + an unfolded polypeptide.. Its function is as follows. Together with its co-chaperonin GroES, plays an essential role in assisting protein folding. The GroEL-GroES system forms a nano-cage that allows encapsulation of the non-native substrate proteins and provides a physical environment optimized to promote and accelerate protein folding. In Neorickettsia sennetsu (strain ATCC VR-367 / Miyayama) (Ehrlichia sennetsu), this protein is Chaperonin GroEL.